We begin with the raw amino-acid sequence, 185 residues long: MIDTIMLDAQERMSKCVDATKNQMAKVRTGRAHPSLLDSIQVSCYGSMSPLKQVANVGVEDSRTLTVNVFDRSMVQAVEKAIMSSDLGLNPMSAGATLRIPLPSLTEERRKDFIKVVRNEAENGRIAIRNVRRDAISEVKKLEKAKACTEDDVRRSEDEVQKHTDSSIKNIDQILAAKEKELMEV.

Belongs to the RRF family.

It localises to the cytoplasm. Functionally, responsible for the release of ribosomes from messenger RNA at the termination of protein biosynthesis. May increase the efficiency of translation by recycling ribosomes from one round of translation to another. This is Ribosome-recycling factor from Shewanella frigidimarina (strain NCIMB 400).